Consider the following 219-residue polypeptide: FMN-dependent NADH:quinone oxidoreductase 2 (219 aa).

Residues S10 and 23–25 (SIS) each bind FMN.

The protein belongs to the azoreductase type 1 family. As to quaternary structure, homodimer. The cofactor is FMN.

It catalyses the reaction 2 a quinone + NADH + H(+) = 2 a 1,4-benzosemiquinone + NAD(+). The enzyme catalyses N,N-dimethyl-1,4-phenylenediamine + anthranilate + 2 NAD(+) = 2-(4-dimethylaminophenyl)diazenylbenzoate + 2 NADH + 2 H(+). Quinone reductase that provides resistance to thiol-specific stress caused by electrophilic quinones. Functionally, also exhibits azoreductase activity. Catalyzes the reductive cleavage of the azo bond in aromatic azo compounds to the corresponding amines. This is FMN-dependent NADH:quinone oxidoreductase 2 from Colwellia psychrerythraea (strain 34H / ATCC BAA-681) (Vibrio psychroerythus).